The primary structure comprises 227 residues: Cytidylate kinase (227 aa).

Position 12 to 20 (12 to 20 (GPSGAGKGT)) interacts with ATP.

Belongs to the cytidylate kinase family. Type 1 subfamily.

It is found in the cytoplasm. It catalyses the reaction CMP + ATP = CDP + ADP. The enzyme catalyses dCMP + ATP = dCDP + ADP. This chain is Cytidylate kinase, found in Photorhabdus laumondii subsp. laumondii (strain DSM 15139 / CIP 105565 / TT01) (Photorhabdus luminescens subsp. laumondii).